A 459-amino-acid polypeptide reads, in one-letter code: Putrescine aminotransferase (459 aa).

Residues 150-151 (GT) and Gln-274 contribute to the pyridoxal 5'-phosphate site. Lys-300 bears the N6-(pyridoxal phosphate)lysine mark. Thr-332 serves as a coordination point for pyridoxal 5'-phosphate.

The protein belongs to the class-III pyridoxal-phosphate-dependent aminotransferase family. Putrescine aminotransferase subfamily. It depends on pyridoxal 5'-phosphate as a cofactor.

It catalyses the reaction an alkane-alpha,omega-diamine + 2-oxoglutarate = an omega-aminoaldehyde + L-glutamate. The catalysed reaction is putrescine + 2-oxoglutarate = 1-pyrroline + L-glutamate + H2O. It carries out the reaction cadaverine + 2-oxoglutarate = 5-aminopentanal + L-glutamate. It functions in the pathway amine and polyamine degradation; putrescine degradation; 4-aminobutanal from putrescine (transaminase route): step 1/1. In terms of biological role, catalyzes the aminotransferase reaction from putrescine to 2-oxoglutarate, leading to glutamate and 4-aminobutanal, which spontaneously cyclizes to form 1-pyrroline. This is the first step in one of two pathways for putrescine degradation, where putrescine is converted into 4-aminobutanoate (gamma-aminobutyrate or GABA) via 4-aminobutanal. Also functions as a cadaverine transaminase in a a L-lysine degradation pathway to succinate that proceeds via cadaverine, glutarate and L-2-hydroxyglutarate. The protein is Putrescine aminotransferase of Escherichia coli O17:K52:H18 (strain UMN026 / ExPEC).